The primary structure comprises 566 residues: Membrane protein insertase YidC (566 aa).

The next 5 membrane-spanning stretches (helical) occupy residues 3 to 23 (IKRIILYVIVALLAIALFNAW), 346 to 366 (GWLWPISMLLFWILSAVHAVV), 369 to 389 (WGWSIIITTILIKIVFYWFSA), 436 to 456 (GGCLPMLIQVPVFIAFYYVII), and 509 to 529 (MWILPVIFTVFFINFPAGLVL).

This sequence belongs to the OXA1/ALB3/YidC family. Type 1 subfamily. Interacts with the Sec translocase complex via SecD. Specifically interacts with transmembrane segments of nascent integral membrane proteins during membrane integration.

Its subcellular location is the cell inner membrane. Required for the insertion and/or proper folding and/or complex formation of integral membrane proteins into the membrane. Involved in integration of membrane proteins that insert both dependently and independently of the Sec translocase complex, as well as at least some lipoproteins. Aids folding of multispanning membrane proteins. This chain is Membrane protein insertase YidC, found in Coxiella burnetii (strain RSA 331 / Henzerling II).